A 343-amino-acid polypeptide reads, in one-letter code: MYNLARQLLFKLSPETSHDLSLDLIGAGGRLGLNGLLSKSPAKLPVSVMGLEFPNPVGLAAGLDKNGAAIDGFAQLGFGFVEIGTVTPRAQPGNPKPRIFRLPNAEAIINRMGFNNLGVDNLVSRVEAAKYRGVLGINIGKNFDTPVERAVDDYLICLDKVYAHASYVTVNVSSPNTPGLRSLQFGDSLKQLLQALSLRQQELTQRHGRRVPLAIKIAPDMTDEETVLVAAALIESGMDAVIATNTTLSRQGVEGLPHADQAGGLSGAPVREKSTHIVKVLAGELAGRLPIIAAGGITEGRHAAEKIAAGASLVQIYSGFIYKGPALIRESVDAIAAMPRAAR.

FMN contacts are provided by residues 61-65 (AGLDK) and Thr-85. A substrate-binding site is contributed by Lys-65. Residue 110–114 (NRMGF) coordinates substrate. Positions 138 and 171 each coordinate FMN. Position 171 (Asn-171) interacts with substrate. Ser-174 (nucleophile) is an active-site residue. Substrate is bound at residue Asn-176. Residues Lys-216 and Thr-244 each contribute to the FMN site. Residue 245–246 (NT) coordinates substrate. FMN is bound by residues Gly-267, Gly-296, and 317–318 (YS).

It belongs to the dihydroorotate dehydrogenase family. Type 2 subfamily. Monomer. FMN is required as a cofactor.

Its subcellular location is the cell membrane. It catalyses the reaction (S)-dihydroorotate + a quinone = orotate + a quinol. The protein operates within pyrimidine metabolism; UMP biosynthesis via de novo pathway; orotate from (S)-dihydroorotate (quinone route): step 1/1. Its function is as follows. Catalyzes the conversion of dihydroorotate to orotate with quinone as electron acceptor. The polypeptide is Dihydroorotate dehydrogenase (quinone) (Pseudomonas syringae pv. syringae (strain B728a)).